The primary structure comprises 323 residues: D-alanine--D-alanine ligase (323 aa).

The ATP-grasp domain maps to 105–305 (KQQLVPRGIP…YEDLVEAIVE (201 aa)). 131-188 (PLARPYVLKPVNEGSSVGVAIVTDESNYGNPIRRDAPGPWQEFRELLAEPFIRGRELT) contacts ATP. Aspartate 256, glutamate 272, and asparagine 274 together coordinate Mg(2+).

It belongs to the D-alanine--D-alanine ligase family. The cofactor is Mg(2+). Mn(2+) is required as a cofactor.

The protein resides in the cytoplasm. It carries out the reaction 2 D-alanine + ATP = D-alanyl-D-alanine + ADP + phosphate + H(+). Its pathway is cell wall biogenesis; peptidoglycan biosynthesis. Cell wall formation. The chain is D-alanine--D-alanine ligase from Erythrobacter litoralis (strain HTCC2594).